Consider the following 280-residue polypeptide: Endochitinase A (280 aa).

Residues 1-25 form the signal peptide; sequence MANAPRILALGLLALLCAAAGPAAA. The Chitin-binding type-1 domain occupies 26–60; that stretch reads QNCGCQPNFCCSKFGYCGTTDAYCGDGCQSGPCRS. 4 disulfides stabilise this stretch: Cys28/Cys36, Cys30/Cys42, Cys35/Cys49, and Cys53/Cys58. Residues 61–77 are hinge region (poly-Gly); the sequence is GGGGGGGGGGGGGGSGG. Residues 78-280 form a catalytic region; sequence ANVANVVTDA…RVDPGPNLTC (203 aa). A disulfide bridge links Cys100 with Cys149. The Proton donor role is filled by Glu144. An N-linked (GlcNAc...) asparagine glycan is attached at Asn155. 2 cysteine pairs are disulfide-bonded: Cys161–Cys170 and Cys248–Cys280. Asn277 carries an N-linked (GlcNAc...) asparagine glycan.

The protein belongs to the glycosyl hydrolase 19 family. Chitinase class IV subfamily.

Its subcellular location is the secreted. It catalyses the reaction Random endo-hydrolysis of N-acetyl-beta-D-glucosaminide (1-&gt;4)-beta-linkages in chitin and chitodextrins.. Inactivated by l-ethyl-3-(3-dimethylaminopropyl)carbodiimide (EDC) in the absence of exogenous nucleophiles (e.g. GlcNAc4, GlcNAc3 and GlcNAc2). Not inhibited by tetra-N-acetylchitopentaose or modified chitotetraose substrate TMG-chitotriomycin-pMP, containing a free, non-acetylated glucosaminyl residue or a N-trimethylamino glucosamine (TMG) residue at the non-reducing terminus, respectively. Defense against chitin-containing fungal pathogens. Hydrolyzes glycol chitin and tetra-N-acetylchitotetraose in vitro. Its action is countered by fungal polyglycine hydrolases and fungalysin, that cleave the chitin-binding domain from the protein. This Zea mays (Maize) protein is Endochitinase A.